The following is a 407-amino-acid chain: Argininosuccinate synthase (407 aa).

ATP-binding positions include 10 to 18 (AYSGGLDTS) and A37. Positions 90 and 95 each coordinate L-citrulline. ATP is bound at residue G120. 3 residues coordinate L-aspartate: T122, N126, and D127. Position 126 (N126) interacts with L-citrulline. R130, S181, S190, E266, and Y278 together coordinate L-citrulline.

Belongs to the argininosuccinate synthase family. Type 1 subfamily. Homotetramer.

The protein localises to the cytoplasm. The enzyme catalyses L-citrulline + L-aspartate + ATP = 2-(N(omega)-L-arginino)succinate + AMP + diphosphate + H(+). Its pathway is amino-acid biosynthesis; L-arginine biosynthesis; L-arginine from L-ornithine and carbamoyl phosphate: step 2/3. The chain is Argininosuccinate synthase from Ruegeria sp. (strain TM1040) (Silicibacter sp.).